A 720-amino-acid chain; its full sequence is Neurochondrin (720 aa).

It belongs to the neurochondrin family.

The protein resides in the cytoplasm. It is found in the cytosol. Its subcellular location is the cell projection. The protein localises to the dendrite. It localises to the postsynapse. Its function is as follows. Probably involved in signal transduction, in the nervous system. Required for the spatial learning process. May also be involved in neurite outgrowth. This Xenopus laevis (African clawed frog) protein is Neurochondrin (ncdn).